A 484-amino-acid chain; its full sequence is tRNA sulfurtransferase (484 aa).

Residues 63–167 enclose the THUMP domain; the sequence is QGIRDRLSCM…DQRLFVVHDQ (105 aa). Residues 185–186, Lys267, Gly289, and Gln298 contribute to the ATP site; that span reads LM. A disulfide bridge links Cys346 with Cys457. Residues 405–483 enclose the Rhodanese domain; it reads ALAGQVIIDI…GHANVRVYRP (79 aa). Cys457 serves as the catalytic Cysteine persulfide intermediate.

It belongs to the ThiI family.

It is found in the cytoplasm. It carries out the reaction [ThiI sulfur-carrier protein]-S-sulfanyl-L-cysteine + a uridine in tRNA + 2 reduced [2Fe-2S]-[ferredoxin] + ATP + H(+) = [ThiI sulfur-carrier protein]-L-cysteine + a 4-thiouridine in tRNA + 2 oxidized [2Fe-2S]-[ferredoxin] + AMP + diphosphate. The catalysed reaction is [ThiS sulfur-carrier protein]-C-terminal Gly-Gly-AMP + S-sulfanyl-L-cysteinyl-[cysteine desulfurase] + AH2 = [ThiS sulfur-carrier protein]-C-terminal-Gly-aminoethanethioate + L-cysteinyl-[cysteine desulfurase] + A + AMP + 2 H(+). It participates in cofactor biosynthesis; thiamine diphosphate biosynthesis. Functionally, catalyzes the ATP-dependent transfer of a sulfur to tRNA to produce 4-thiouridine in position 8 of tRNAs, which functions as a near-UV photosensor. Also catalyzes the transfer of sulfur to the sulfur carrier protein ThiS, forming ThiS-thiocarboxylate. This is a step in the synthesis of thiazole, in the thiamine biosynthesis pathway. The sulfur is donated as persulfide by IscS. This Pseudomonas syringae pv. tomato (strain ATCC BAA-871 / DC3000) protein is tRNA sulfurtransferase.